Here is a 191-residue protein sequence, read N- to C-terminus: Ferric nitrobindin-like protein (191 aa).

A GXWXGXG motif is present at residues 20–26 (GNWAGAG).

The protein belongs to the nitrobindin family.

This Streptomyces avermitilis (strain ATCC 31267 / DSM 46492 / JCM 5070 / NBRC 14893 / NCIMB 12804 / NRRL 8165 / MA-4680) protein is Ferric nitrobindin-like protein.